Here is a 319-residue protein sequence, read N- to C-terminus: uncharacterized protein (319 aa).

Positions 268 to 312 (SSVVAVTHPPSTTSTTTSVSETLSSFIAPSDLSSQPSPSSHPSSP) are enriched in low complexity. The tract at residues 268 to 319 (SSVVAVTHPPSTTSTTTSVSETLSSFIAPSDLSSQPSPSSHPSSPFGNHNEF) is disordered.

This is an uncharacterized protein from Lepidoptera (butterflies and moths).